A 138-amino-acid chain; its full sequence is MATLQCRVVSAREEIYAGEISMLIATGSEGEVGILAGHTPLITLLKPGSMRIQTPDGNEEVIYVSGGVLEVQPKLVTVLADTAVRAHDLDEAKIVEARKKAEQMLANQTETLQTNAALASLAESVAQLQTIRKYRNRA.

Belongs to the ATPase epsilon chain family. In terms of assembly, F-type ATPases have 2 components, CF(1) - the catalytic core - and CF(0) - the membrane proton channel. CF(1) has five subunits: alpha(3), beta(3), gamma(1), delta(1), epsilon(1). CF(0) has three main subunits: a, b and c.

Its subcellular location is the cell inner membrane. Functionally, produces ATP from ADP in the presence of a proton gradient across the membrane. In Psychrobacter sp. (strain PRwf-1), this protein is ATP synthase epsilon chain.